The chain runs to 130 residues: Small ribosomal subunit protein uS11c (130 aa).

The protein belongs to the universal ribosomal protein uS11 family. Part of the 30S ribosomal subunit.

It is found in the plastid. Its subcellular location is the cyanelle. The sequence is that of Small ribosomal subunit protein uS11c from Cyanophora paradoxa.